Consider the following 328-residue polypeptide: Fructokinase-2 (328 aa).

The protein belongs to the carbohydrate kinase PfkB family.

It catalyses the reaction D-fructose + ATP = D-fructose 6-phosphate + ADP + H(+). It functions in the pathway glycan biosynthesis; starch biosynthesis. May play an important role in maintaining the flux of carbon towards starch formation. This Solanum lycopersicum (Tomato) protein is Fructokinase-2 (FRK2).